A 587-amino-acid polypeptide reads, in one-letter code: Glutamine--tRNA ligase (587 aa).

Residues 58 to 68 (PEPNGYLHIGH) carry the 'HIGH' region motif. ATP contacts are provided by residues 59–61 (EPN) and 65–71 (HIGHAKS). L-glutamine contacts are provided by aspartate 91 and tyrosine 240. Residues threonine 259 and 294-295 (RL) each bind ATP. A 'KMSKS' region motif is present at residues 301 to 305 (VTSKR).

Belongs to the class-I aminoacyl-tRNA synthetase family. As to quaternary structure, monomer.

The protein localises to the cytoplasm. The enzyme catalyses tRNA(Gln) + L-glutamine + ATP = L-glutaminyl-tRNA(Gln) + AMP + diphosphate. This is Glutamine--tRNA ligase from Bordetella parapertussis (strain 12822 / ATCC BAA-587 / NCTC 13253).